The sequence spans 255 residues: Probable septum site-determining protein MinC (255 aa).

The segment covering 103 to 115 has biased composition (basic and acidic residues); sequence SHGRRPRGERSEE. Residues 103–136 form a disordered region; sequence SHGRRPRGERSEEAAEAVPAAAEPVPAPAASPAP. The segment covering 127–136 has biased composition (pro residues); that stretch reads VPAPAASPAP.

It belongs to the MinC family. As to quaternary structure, interacts with MinD and FtsZ.

Its function is as follows. Cell division inhibitor that blocks the formation of polar Z ring septums. Rapidly oscillates between the poles of the cell to destabilize FtsZ filaments that have formed before they mature into polar Z rings. Prevents FtsZ polymerization. This Ralstonia nicotianae (strain ATCC BAA-1114 / GMI1000) (Ralstonia solanacearum) protein is Probable septum site-determining protein MinC.